Reading from the N-terminus, the 744-residue chain is Photosystem I P700 chlorophyll a apoprotein A2 (744 aa).

A run of 8 helical transmembrane segments spans residues 48-71 (LFATHFGHLAIIFLWASGNVFHIA), 137-160 (LYAGAIGLLLLAAVFLFAGWLHLQ), 177-201 (LNHHLAGLFGVSSLAWTGHLVHVAI), 275-293 (MAHHHLAIAVIFIVAGHMY), 337-360 (LHFQLALALACLGVVTSLVAQHMY), 376-402 (AALYTHHQYIAGFLMVGAFAHGAIFLV), 424-446 (AIISHLSWVSLFLGFHTLGLYVH), and 527-545 (FLVHHAIALGLHTTTLILV). Residues C569 and C578 each coordinate [4Fe-4S] cluster. A run of 2 helical transmembrane segments spans residues 585 to 606 (AFYLAMFWMLNTIGWVTFYWHW) and 653 to 675 (LAVWAWMFLFGHLVWATGFMFLI). H664, M672, and Y680 together coordinate chlorophyll a. W681 is a phylloquinone binding site. The helical transmembrane segment at 717-737 (LVGLAHFTVGYVLTYAAFVIA) threads the bilayer.

The protein belongs to the PsaA/PsaB family. The PsaA/B heterodimer binds the P700 chlorophyll special pair and subsequent electron acceptors. PSI consists of a core antenna complex that captures photons, and an electron transfer chain that converts photonic excitation into a charge separation. The cyanobacterial PSI reaction center is composed of one copy each of PsaA,B,C,D,E,F,I,J,K,L,M and X, and forms trimeric complexes. It depends on PSI electron transfer chain: 5 chlorophyll a, 1 chlorophyll a', 2 phylloquinones and 3 4Fe-4S clusters. PSI core antenna: 90 chlorophyll a, 22 carotenoids, 3 phospholipids and 1 galactolipid. P700 is a chlorophyll a/chlorophyll a' dimer, A0 is one or more chlorophyll a, A1 is one or both phylloquinones and FX is a shared 4Fe-4S iron-sulfur center. as a cofactor.

It is found in the cellular thylakoid membrane. The catalysed reaction is reduced [plastocyanin] + hnu + oxidized [2Fe-2S]-[ferredoxin] = oxidized [plastocyanin] + reduced [2Fe-2S]-[ferredoxin]. PsaA and PsaB bind P700, the primary electron donor of photosystem I (PSI), as well as the electron acceptors A0, A1 and FX. PSI is a plastocyanin/cytochrome c6-ferredoxin oxidoreductase, converting photonic excitation into a charge separation, which transfers an electron from the donor P700 chlorophyll pair to the spectroscopically characterized acceptors A0, A1, FX, FA and FB in turn. Oxidized P700 is reduced on the lumenal side of the thylakoid membrane by plastocyanin or cytochrome c6. The sequence is that of Photosystem I P700 chlorophyll a apoprotein A2 from Synechococcus sp. (strain JA-2-3B'a(2-13)) (Cyanobacteria bacterium Yellowstone B-Prime).